A 1145-amino-acid chain; its full sequence is MQKKRNRAGPPQQEAASDDGEMSDSSDKMEVAQGKGKSAVKRAPDADEVLRPVKLSKSDLYKPPTNDELNRLKETEHLFHTNLLRMQIEELLQEVKLKEKRRKTIDGFLREINTLLGTIPETPQTDLTDQTWLPDSIKVPILQVPYQVKGKFCFLPPSSIKVVGSYLLGTCIKPEINVDLAVTMPQEILQAKDNLNQRYSRKRALYLAHIASHLANNELFSSVKFTYMNSNHLKPVLLLRPYGKDEKLVTVRIHVCPPPGFFKISRLYPNKNNVRTAWYTEQETEGVNEPPTPHYNNTILSDLTLEHHLHHLSNCASDFPGMKDAVALLKVWLHQRQLDKGYGCFNGFLAAMLISYLLSKNKINKVMSGYQVLRNTLQFLATTDLTVNGITMATSTDSSLPSLHDFHEAFQVVFVDPLGVVNLCADMTTNKYHQIQFEARESLKVLDDTSADGFHLLLMVPKPFVRTFDHVFHLTNVSKLQGTCKKMKLLNQLIDQGGDYLATSLPYVLSILSKGLGPRVALLSHTLPHRPEWDIGEEPAKHRDSSLLSVGLLLEAELHTSVLEKGPAADSSQALDFRAFWGEKSELRRFQDGSICEAVVWPGSSLCEKRKVPELIVKYLLELHADIPESCISYTGNVLDCVLTRGKEAGTEEEKMVGIIQSYDDLSRKLWNLTDLPLTVTSVQGTHPCLRYSDVFPPLPVKPDWSSYQLLREKKCLVPNPEKPCPAYVAPVKVICHMEGSGKWPQDKDAIKRVKAAFQIRLAELLRAQHQLLCNPSATHTDVYKDGYVFRVQVAYHREPQYMKEIVTPEGMLKYQDTEESLQLELETLHLPSLTSTLHGLHQQHPAFGGTSRMAKRWIHSQLLGDSFSEECVDLLVAHLFLHPAPYSPPSSPQVGFLRFLHLLATFDWKNSPLIVNLNGELKGPDYTEIQNDFISARAQLPVMFIATPKDKKDSLWTKTQPTAQILQRLIVLCLESLRALEQQLMDPSGSQDYKMTFRPPLDLYDILIRLNPKQIPRHREAVDQPAKSFFRGLLKEGAQVKDLMFPVVGYDPVQCYLQELREAYGEFALFFHDKHGGDVIGVLWKPSGFEPQPFKTTNMTGRVMDGKSAKPLLVPNVEAIVEDFEILGEGLVASVEARTERWSI.

Residues 1-46 (MQKKRNRAGPPQQEAASDDGEMSDSSDKMEVAQGKGKSAVKRAPDA) form a disordered region.

This sequence belongs to the NRAP family. In terms of assembly, part of the small subunit (SSU) processome, composed of more than 70 proteins and the RNA chaperone small nucleolar RNA (snoRNA) U3.

Its subcellular location is the nucleus. The protein localises to the nucleolus. It is found in the chromosome. Functionally, part of the small subunit (SSU) processome, first precursor of the small eukaryotic ribosomal subunit. During the assembly of the SSU processome in the nucleolus, many ribosome biogenesis factors, an RNA chaperone and ribosomal proteins associate with the nascent pre-rRNA and work in concert to generate RNA folding, modifications, rearrangements and cleavage as well as targeted degradation of pre-ribosomal RNA by the RNA exosome. This is Nucleolar protein 6 (nol6) from Xenopus tropicalis (Western clawed frog).